The primary structure comprises 200 residues: Large ribosomal subunit protein uL4 (200 aa).

Residues 42-65 are disordered; that stretch reads TRAHKSRADVSGGGKKPFRQKGTG.

The protein belongs to the universal ribosomal protein uL4 family. In terms of assembly, part of the 50S ribosomal subunit.

Its function is as follows. One of the primary rRNA binding proteins, this protein initially binds near the 5'-end of the 23S rRNA. It is important during the early stages of 50S assembly. It makes multiple contacts with different domains of the 23S rRNA in the assembled 50S subunit and ribosome. Functionally, forms part of the polypeptide exit tunnel. The protein is Large ribosomal subunit protein uL4 of Acinetobacter baumannii (strain AB307-0294).